A 317-amino-acid polypeptide reads, in one-letter code: DNA-directed RNA polymerase subunit alpha (317 aa).

The tract at residues 1–234 is alpha N-terminal domain (alpha-NTD); it reads MKQFVRPEFI…AHLEFFIDLN (234 aa). The tract at residues 249-317 is alpha C-terminal domain (alpha-CTD); that stretch reads DDKELDRTVE…ASLGLAFRQS (69 aa).

This sequence belongs to the RNA polymerase alpha chain family. In terms of assembly, homodimer. The RNAP catalytic core consists of 2 alpha, 1 beta, 1 beta' and 1 omega subunit. When a sigma factor is associated with the core the holoenzyme is formed, which can initiate transcription.

The enzyme catalyses RNA(n) + a ribonucleoside 5'-triphosphate = RNA(n+1) + diphosphate. Functionally, DNA-dependent RNA polymerase catalyzes the transcription of DNA into RNA using the four ribonucleoside triphosphates as substrates. The chain is DNA-directed RNA polymerase subunit alpha from Mycoplasma capricolum subsp. capricolum (strain California kid / ATCC 27343 / NCTC 10154).